The primary structure comprises 323 residues: SURF1-like protein (323 aa).

Residues 57 to 71 (DAPKSRENREKDGGK) are compositionally biased toward basic and acidic residues. Residues 57-76 (DAPKSRENREKDGGKSKKSK) are disordered. 2 consecutive transmembrane segments (helical) span residues 81–101 (WSTG…LGIW) and 299–319 (HLNY…MWIH).

Belongs to the SURF1 family.

The protein resides in the mitochondrion inner membrane. Functionally, probably involved in the biogenesis of the COX complex. This Caenorhabditis elegans protein is SURF1-like protein (sft-1).